The following is a 205-amino-acid chain: Small ribosomal subunit protein uS3c (205 aa).

Residues 37 to 106 (IRQLLRDYVL…TWRISLVEVS (70 aa)) form the KH type-2 domain.

Belongs to the universal ribosomal protein uS3 family. As to quaternary structure, part of the 30S ribosomal subunit.

It localises to the plastid. It is found in the chloroplast. The protein is Small ribosomal subunit protein uS3c (rps3) of Cyanidioschyzon merolae (strain NIES-3377 / 10D) (Unicellular red alga).